Consider the following 71-residue polypeptide: Exodeoxyribonuclease 7 small subunit (71 aa).

Belongs to the XseB family. In terms of assembly, heterooligomer composed of large and small subunits.

The protein localises to the cytoplasm. It carries out the reaction Exonucleolytic cleavage in either 5'- to 3'- or 3'- to 5'-direction to yield nucleoside 5'-phosphates.. Its function is as follows. Bidirectionally degrades single-stranded DNA into large acid-insoluble oligonucleotides, which are then degraded further into small acid-soluble oligonucleotides. The chain is Exodeoxyribonuclease 7 small subunit from Clostridium botulinum (strain Kyoto / Type A2).